The sequence spans 856 residues: DNA mismatch repair protein MutS (856 aa).

ATP is bound at residue 618 to 625 (GPNMGGKS).

This sequence belongs to the DNA mismatch repair MutS family.

Its function is as follows. This protein is involved in the repair of mismatches in DNA. It is possible that it carries out the mismatch recognition step. This protein has a weak ATPase activity. This chain is DNA mismatch repair protein MutS, found in Shewanella baltica (strain OS195).